The primary structure comprises 147 residues: Hemoglobin subunit beta (147 aa).

Residue Val-2 is modified to N-acetylvaline. In terms of domain architecture, Globin spans 3–147; the sequence is HLTPEEKNAV…VANALAHKYH (145 aa). Thr-13 bears the Phosphothreonine mark. Ser-45 is modified (phosphoserine). Lys-60 bears the N6-acetyllysine mark. His-64 provides a ligand contact to heme b. Lys-83 is modified (N6-acetyllysine). Residue His-93 participates in heme b binding. An S-nitrosocysteine modification is found at Cys-94. Lys-145 bears the N6-acetyllysine mark.

The protein belongs to the globin family. As to quaternary structure, heterotetramer of two alpha chains and two beta chains. Red blood cells.

Involved in oxygen transport from the lung to the various peripheral tissues. The sequence is that of Hemoglobin subunit beta (HBB) from Macaca fascicularis (Crab-eating macaque).